Reading from the N-terminus, the 1359-residue chain is Junctional cadherin 5-associated protein (1359 aa).

9 disordered regions span residues 1–147 (MYSV…SLPV), 249–411 (PLNE…PAHP), 454–554 (NSSP…TCET), 591–813 (SHLP…CNSK), 840–1076 (KELQ…TIEI), 1105–1141 (RAGQ…PRVS), 1157–1207 (PLFV…KDVE), 1225–1260 (SVAG…DRLM), and 1276–1359 (FRNA…VERV). Basic and acidic residues predominate over residues 15-28 (LSRDPPASREDNPK). Polar residues-rich tracts occupy residues 82–91 (PQSTSASRTS) and 98–112 (QPPS…TGND). Positions 120 to 135 (RQEARSQKPREHENLE) are enriched in basic and acidic residues. The segment covering 302-321 (QQSRGGADSSDSQDSQQMDA) has biased composition (low complexity). Over residues 335-353 (LEPPVYVPPPSYRSPPQNI) the composition is skewed to pro residues. The span at 539 to 554 (RQVSSPYSQGESTCET) shows a compositional bias: polar residues. Residues 591–613 (SHLPDRDMDNNDLKPSADQKNGS) are compositionally biased toward basic and acidic residues. 3 stretches are compositionally biased toward polar residues: residues 619 to 632 (LQEQ…STDL), 689 to 704 (QQTQ…SSQL), and 756 to 773 (LSPS…SVDQ). A compositionally biased stretch (low complexity) spans 849-859 (SSSSSSSSSSS). Over residues 868–880 (QENRAHCRQEDVG) the composition is skewed to basic and acidic residues. Positions 1003–1013 (PKITSAFSSVK) are enriched in polar residues. A phosphoserine mark is found at Ser1044 and Ser1050. At Ser1194 the chain carries Phosphoserine. Phosphoserine is present on Ser1281. Positions 1324–1342 (SISREEKEHPAAQKEKSMD) are enriched in basic and acidic residues.

It localises to the cell junction. The protein resides in the adherens junction. The sequence is that of Junctional cadherin 5-associated protein from Homo sapiens (Human).